Consider the following 681-residue polypeptide: Auxin response factor 8 (681 aa).

The segment at residues 120–222 is a DNA-binding region (TF-B3); that stretch reads FAKTLTQSDA…DLHVGIRRAK (103 aa). Disordered regions lie at residues 474-518 and 534-577; these read LRRP…AKPP and SLSG…TSSE. Polar residues-rich tracts occupy residues 534-555 and 564-577; these read SLSGTTSPAATGNSSLNWNTEK and GVIQNSPTDNTSSE. Residues 595 to 675 enclose the PB1 domain; it reads PGQCKVFIES…RRLTILTDAG (81 aa).

The protein belongs to the ARF family. As to quaternary structure, homodimers and heterodimers. Expressed in roots, culms, leaves and young panicles.

It localises to the nucleus. Functionally, auxin response factors (ARFs) are transcriptional factors that bind specifically to the DNA sequence 5'-TGTCTC-3' found in the auxin-responsive promoter elements (AuxREs). The polypeptide is Auxin response factor 8 (ARF8) (Oryza sativa subsp. japonica (Rice)).